Consider the following 363-residue polypeptide: MKIGVFVPIGNNGWLISTHAPQYMPTFELNKAIVQKAEHYHFDFALSMIKLRGFGGKTEFWDHNLESFTLMAGLAAVTSKIQIYATAATLTLPPAIVARMASTIDSISGGRFGVNLVTGWQKPEYDQMGMWPGDDYFASRYDYLTEYVQVLRDLWGTGRSDFKGDYFTMNDCRVSPRPSQPMKVICAGQSDAGMAFSAQHADYNFCFGKGVNTPTAFAPTAARMIQAAEKTGRDVGSYVLFMVIADETDEAARAKWEHYKAGADEEALAWLTEQSQKDTRSGSDTNVRQMADPTSAVNINMGTLVGSYASIARMLDEVASVPGTDGVLLTFDDFLAGIDAFGERIQPLMRCRDHIAPVTREVA.

Residues 49–50 (IK), asparagine 115, glutamate 124, 140–141 (RY), and serine 190 each bind FMN.

Belongs to the NtaA/SnaA/DszA monooxygenase family. RutA subfamily.

The enzyme catalyses uracil + FMNH2 + NADH + O2 = (Z)-3-ureidoacrylate + FMN + NAD(+) + H2O + H(+). The catalysed reaction is thymine + FMNH2 + NADH + O2 = (Z)-2-methylureidoacrylate + FMN + NAD(+) + H2O + H(+). Functionally, catalyzes the pyrimidine ring opening between N-3 and C-4 by an unusual flavin hydroperoxide-catalyzed mechanism, adding oxygen atoms in the process to yield ureidoacrylate peracid, that immediately reacts with FMN forming ureidoacrylate and FMN-N(5)-oxide. The FMN-N(5)-oxide reacts spontaneously with NADH to produce FMN. Requires the flavin reductase RutF to regenerate FMN in vivo. This is Pyrimidine monooxygenase RutA from Klebsiella pneumoniae (strain 342).